Consider the following 525-residue polypeptide: Glutamate--cysteine ligase (525 aa).

It belongs to the glutamate--cysteine ligase type 1 family. Type 1 subfamily.

The enzyme catalyses L-cysteine + L-glutamate + ATP = gamma-L-glutamyl-L-cysteine + ADP + phosphate + H(+). The protein operates within sulfur metabolism; glutathione biosynthesis; glutathione from L-cysteine and L-glutamate: step 1/2. This Hahella chejuensis (strain KCTC 2396) protein is Glutamate--cysteine ligase.